The primary structure comprises 413 residues: GTPase HflX (413 aa).

In terms of domain architecture, Hflx-type G spans 200–386; it reads VRVALVGYTN…KVYETVREIH (187 aa). GTP is bound by residues 206–213, 231–235, 252–255, 318–321, and 364–366; these read GYTNVGKS, FATLD, DTVG, NKID, and SAT. 2 residues coordinate Mg(2+): serine 213 and threonine 233.

It belongs to the TRAFAC class OBG-HflX-like GTPase superfamily. HflX GTPase family. As to quaternary structure, monomer. Associates with the 50S ribosomal subunit. The cofactor is Mg(2+).

The protein localises to the cytoplasm. In terms of biological role, GTPase that associates with the 50S ribosomal subunit and may have a role during protein synthesis or ribosome biogenesis. The chain is GTPase HflX from Flavobacterium psychrophilum (strain ATCC 49511 / DSM 21280 / CIP 103535 / JIP02/86).